Reading from the N-terminus, the 326-residue chain is Tagatose 1,6-diphosphate aldolase 2 (326 aa).

The protein belongs to the aldolase LacD family.

The catalysed reaction is D-tagatofuranose 1,6-bisphosphate = D-glyceraldehyde 3-phosphate + dihydroxyacetone phosphate. The protein operates within carbohydrate metabolism; D-tagatose 6-phosphate degradation; D-glyceraldehyde 3-phosphate and glycerone phosphate from D-tagatose 6-phosphate: step 2/2. This chain is Tagatose 1,6-diphosphate aldolase 2 (lacD2), found in Streptococcus agalactiae serotype III (strain NEM316).